Consider the following 245-residue polypeptide: Homeobox protein Hox-A4a (245 aa).

Positions 34 to 99 (DYYERPKDPG…HGPRLTTESC (66 aa)) are disordered. Positions 35 to 51 (YYERPKDPGFPHHEEAS) are enriched in basic and acidic residues. Polar residues-rich tracts occupy residues 53–73 (PRSN…NDLN) and 82–99 (QPQS…TESC). An Antp-type hexapeptide motif is present at residues 126 to 131 (VYPWMK). A DNA-binding region (homeobox) is located at residues 147-206 (PKRSRTAYTRQQALELEKEFHFNRYLTRRRRVEIAHTMCLSERQVKIWFQNRRMKWKKDH). The disordered stretch occupies residues 205-245 (DHKLPNTKIRSSSSAPSNHHVKTDATQQQQTLLPTPCSSNL). A compositionally biased stretch (polar residues) spans 212-221 (KIRSSSSAPS). Residues 230-245 (TQQQQTLLPTPCSSNL) are compositionally biased toward low complexity.

Belongs to the Antp homeobox family. Deformed subfamily.

It is found in the nucleus. Sequence-specific transcription factor which is part of a developmental regulatory system that provides cells with specific positional identities on the anterior-posterior axis. The sequence is that of Homeobox protein Hox-A4a (hoxa4a) from Danio rerio (Zebrafish).